Here is a 433-residue protein sequence, read N- to C-terminus: Leucine-rich repeat extensin-like protein 7 (433 aa).

Residues 1-21 (MRIYQPTLLIFTTVVLLSISA) form the signal peptide. Asn71 carries an N-linked (GlcNAc...) asparagine glycan. LRR repeat units lie at residues 98-122 (VKTV…LGLL), 123-145 (TDIA…GFSQ), 146-170 (LSLL…VIGL), 171-194 (PKLK…LFDK), 196-217 (LDAL…MGNS), 219-239 (VSVL…SFGK), 241-265 (GKTL…MGLL), 266-289 (QNVT…MGQM), and 290-313 (ENLE…LCSL). Asn267 carries N-linked (GlcNAc...) asparagine glycosylation. A glycan (N-linked (GlcNAc...) asparagine) is linked at Asn340. Residues 380–433 (FSPPPSQISPSSQPLAPAPSPTSPPLSTPPPARPCPPVYSPPPPPPLSLAPSMN) are disordered. A contains the Ser-Pro(4) repeats region spans residues 381-433 (SPPPSQISPSSQPLAPAPSPTSPPLSTPPPARPCPPVYSPPPPPPLSLAPSMN). Residues 395–427 (APAPSPTSPPLSTPPPARPCPPVYSPPPPPPLS) show a composition bias toward pro residues.

Hydroxylated on proline residues in the S-P-P-P-P repeat. Post-translationally, O-glycosylated on hydroxyprolines. Expressed in flowers and pollen.

The protein localises to the secreted. It localises to the cell wall. Modulates cell morphogenesis by regulating cell wall formation and assembly, and/or growth polarization. The polypeptide is Leucine-rich repeat extensin-like protein 7 (LRX7) (Arabidopsis thaliana (Mouse-ear cress)).